A 553-amino-acid polypeptide reads, in one-letter code: MDEKKLFLKALKKKFEGEDPDEKYTNFYCFGGWEQSARKKEFTEYAKKAAEKRGGIPFYNPDIGVPLGQRKLMAYRVSGTDAYVEGDDLHFVNNAAIQQMVDDIKRTVIVGMDTAHAVLEKRLGVEVTPETINEYMEAINHALPGGAVVQEHMVEVHPGLVEDCYAKIFTGDDNLADELDKRILIDINKEFPEEQAEQLKSYIGNRTYQVNRVPTIVVRTCDGGTVSRWSAMQIGMSFISAYKLCAGEAAIADFSYAAKHADVIEMGTIMPARRARGPNEPGGVAFGTFADIVQTSRVSDDPANVSLEVIAGAAALYDQVWLGSYMSGGVGFTQYATAAYTDDILDDFVYYGMEYVDDKYGICGTKPTMDVVRDISTEVTLYSLEQYEEYPTLLEDHFGGSQRAAVAAAAAGCSTAFATGNSNAGINGWYLSQILHKEAHSRLGFYGYDLQDQCGASNSLSIRSDEGLIHELRGPNYPNYAMNVGHQPEYAGIAQAPHAARGDAFCTNPLIKVAFADKDLAFDFTSPRKSIAAGALREFMPEGERDLIIPAGK.

Q150 is a binding site for coenzyme F430. Coenzyme B-binding positions include R228, 259-260, and R273; that span reads KH. H260 carries the post-translational modification Pros-methylhistidine. R274 carries the 5-methylarginine modification. A coenzyme M-binding site is contributed by Y335. Q402 is subject to 2-methylglutamine. Position 446 (Y446) interacts with coenzyme M. G447 carries the 1-thioglycine modification. D452 is subject to (Z)-2,3-didehydroaspartate. C454 carries the post-translational modification S-methylcysteine.

This sequence belongs to the methyl-coenzyme M reductase alpha subunit family. As to quaternary structure, MCR is a hexamer of two alpha, two beta, and two gamma chains, forming a dimer of heterotrimers. Coenzyme F430 serves as cofactor. The alpha subunit contains six modified amino acids near the active site region. Is methylated on His-260, Arg-274, Gln-402 and Cys-454, probably by the action of specific S-adenosylmethionine-dependent methyltransferases. Also contains a thioglycine at position 447, forming a thiopeptide bond. Contains a didehydroaspartate residue at position 452. The methylation on C5 of Arg-274 is a post-translational methylation not essential in vivo, but which plays a role for the stability and structural integrity of MCR.

The catalysed reaction is coenzyme B + methyl-coenzyme M = methane + coenzyme M-coenzyme B heterodisulfide. It participates in one-carbon metabolism; methyl-coenzyme M reduction; methane from methyl-coenzyme M: step 1/1. In terms of biological role, component of the methyl-coenzyme M reductase (MCR) I that catalyzes the reductive cleavage of methyl-coenzyme M (CoM-S-CH3 or 2-(methylthio)ethanesulfonate) using coenzyme B (CoB or 7-mercaptoheptanoylthreonine phosphate) as reductant which results in the production of methane and the mixed heterodisulfide of CoB and CoM (CoM-S-S-CoB). This is the final step in methanogenesis. This Methanothermobacter marburgensis (strain ATCC BAA-927 / DSM 2133 / JCM 14651 / NBRC 100331 / OCM 82 / Marburg) (Methanobacterium thermoautotrophicum) protein is Methyl-coenzyme M reductase II subunit alpha (mrtA).